Consider the following 121-residue polypeptide: Small ribosomal subunit protein uS13 (121 aa).

Residues 94 to 121 are disordered; it reads GLPVRGQNTKNNSRTRKGPRRTVANKKK. Positions 106-121 are enriched in basic residues; it reads SRTRKGPRRTVANKKK.

This sequence belongs to the universal ribosomal protein uS13 family. Part of the 30S ribosomal subunit. Forms a loose heterodimer with protein S19. Forms two bridges to the 50S subunit in the 70S ribosome.

In terms of biological role, located at the top of the head of the 30S subunit, it contacts several helices of the 16S rRNA. In the 70S ribosome it contacts the 23S rRNA (bridge B1a) and protein L5 of the 50S subunit (bridge B1b), connecting the 2 subunits; these bridges are implicated in subunit movement. Contacts the tRNAs in the A and P-sites. In Halalkalibacterium halodurans (strain ATCC BAA-125 / DSM 18197 / FERM 7344 / JCM 9153 / C-125) (Bacillus halodurans), this protein is Small ribosomal subunit protein uS13.